A 297-amino-acid chain; its full sequence is Calponin-1 (297 aa).

Residues 28–131 (HQREQELREW…STLLALASMA (104 aa)) enclose the Calponin-homology (CH) domain. 3 Calponin-like repeats span residues 164 to 189 (IGLQ…RHLY), 204 to 229 (ISLQ…RQIF), and 243 to 268 (VSLQ…RQVY). At T170 the chain carries Phosphothreonine; by ROCK2. S175 is modified (phosphoserine; by ROCK2). Residues T180 and T184 each carry the phosphothreonine; by ROCK2 modification. Phosphothreonine; by ROCK2 is present on T259.

Belongs to the calponin family. Part of cGMP kinase signaling complex at least composed of ACTA2/alpha-actin, CNN1/calponin H1, PLN/phospholamban, PRKG1 and ITPR1.

Functionally, thin filament-associated protein that is implicated in the regulation and modulation of smooth muscle contraction. It is capable of binding to actin, calmodulin and tropomyosin. The interaction of calponin with actin inhibits the actomyosin Mg-ATPase activity. This is Calponin-1 (CNN1) from Ovis aries (Sheep).